The chain runs to 286 residues: Undecaprenyl-diphosphatase (286 aa).

The next 7 helical transmembrane spans lie at 50 to 70 (PGVS…IAYF), 97 to 117 (LGIA…AIKL), 127 to 147 (LRSV…LALA), 165 to 185 (GLLV…RSGS), 200 to 220 (AARF…LVEL), 230 to 250 (GGVL…WLAI), and 262 to 282 (TWVF…WWAG).

Belongs to the UppP family.

The protein resides in the cell inner membrane. The catalysed reaction is di-trans,octa-cis-undecaprenyl diphosphate + H2O = di-trans,octa-cis-undecaprenyl phosphate + phosphate + H(+). In terms of biological role, catalyzes the dephosphorylation of undecaprenyl diphosphate (UPP). Confers resistance to bacitracin. The chain is Undecaprenyl-diphosphatase from Synechococcus sp. (strain WH7803).